Reading from the N-terminus, the 326-residue chain is Ribosomal large subunit pseudouridine synthase D (326 aa).

Aspartate 144 is a catalytic residue.

Belongs to the pseudouridine synthase RluA family.

The protein localises to the cytoplasm. It catalyses the reaction uridine(1911/1915/1917) in 23S rRNA = pseudouridine(1911/1915/1917) in 23S rRNA. Its function is as follows. Responsible for synthesis of pseudouridine from uracil at positions 1911, 1915 and 1917 in 23S ribosomal RNA. The polypeptide is Ribosomal large subunit pseudouridine synthase D (Borreliella burgdorferi (strain ATCC 35210 / DSM 4680 / CIP 102532 / B31) (Borrelia burgdorferi)).